Consider the following 560-residue polypeptide: Choline/ethanolamine transporter FLVCR1 (560 aa).

Positions 1–22 (MVKLNDEEGAAMAPGHQPTNGY) are disordered. Residues 1–99 (MVKLNDEEGA…TPGTEGSPAP (99 aa)) lie on the Cytoplasmic side of the membrane. At Ser56 the chain carries Phosphoserine. The tract at residues 68–99 (QTPLAPEEETQTRLLPTGPGEETPGTEGSPAP) is disordered. The span at 83 to 95 (PTGPGEETPGTEG) shows a compositional bias: low complexity. A helical membrane pass occupies residues 100-124 (QTALSARRFVVLLIFSLYSLVNAFQ). Residues 125 to 142 (WIQYSVISNVFEGFYGVS) are Extracellular-facing. A helical transmembrane segment spans residues 143 to 170 (SLHIDWLSMVYMLAYVPLIFPATWLLDT). Residues 171–172 (RG) are Cytoplasmic-facing. A helical membrane pass occupies residues 173–192 (LRLTALLGSGLNCLGAWVKC). Residues 193-199 (ASVQQHL) are Extracellular-facing. Residues 200–228 (FWVTMLGQCLCSVAQVFILGLPSRIASVW) form a helical membrane-spanning segment. An ethanolamine-binding site is contributed by Gln214. Residues 229 to 233 (FGPKE) lie on the Cytoplasmic side of the membrane. Residues 234-259 (VSTACATAVLGNQLGAAIGFLLPPVL) form a helical membrane-spanning segment. Topologically, residues 260 to 265 (VPNTQN) are extracellular. A glycan (N-linked (GlcNAc...) asparagine) is linked at Asn265. A helical membrane pass occupies residues 266-295 (NTDLLACNISTMFYGTSSVATFLCFLTIIA). Residues 296-331 (FKEKPQYPPSQAQAALQNSPPAKYSYKKSIRNLFRN) lie on the Cytoplasmic side of the membrane. A helical transmembrane segment spans residues 332-362 (VPFVLLLITYGIITGAFYSVSTLLNQMILTY). At 363–366 (YKGE) the chain is on the extracellular side. Residues 367–395 (EVSAGKIGLTLVVAGMVGSILCGFWLDYT) form a helical membrane-spanning segment. The Cytoplasmic portion of the chain corresponds to 396 to 397 (KI). The helical transmembrane segment at 398–420 (YKQTTLIVYILSFLGMVIFTFTL) threads the bilayer. Topologically, residues 421–423 (DLG) are extracellular. Residues 424–453 (YGIVVFVTGGVLGFFMTGYLPLGFEFAVEI) traverse the membrane as a helical segment. Residues 454–461 (TYPESEGT) are Cytoplasmic-facing. Residues 462 to 487 (SSGLLNAAAQIFGILFTLAQGKLTTD) traverse the membrane as a helical segment. Gln471 contributes to the ethanolamine binding site. Residue Gln471 coordinates choline. The Extracellular segment spans residues 488–489 (YS). A helical transmembrane segment spans residues 490–512 (PKAGNIFLCVWLFLGIILTALIK). Over 513–560 (SDLRRHNINIGIANGDIKAVPVEDTVEDSPTDKESKTIVMSKQSESAI) the chain is Cytoplasmic. Residues 537 to 560 (TVEDSPTDKESKTIVMSKQSESAI) are disordered. Residue Ser541 is modified to Phosphoserine. Over residues 550–560 (IVMSKQSESAI) the composition is skewed to polar residues.

Belongs to the major facilitator superfamily. Feline leukemia virus subgroup C receptor (TC 2.A.1.28.1) family.

The protein resides in the cell membrane. The enzyme catalyses choline(out) = choline(in). It catalyses the reaction ethanolamine(in) = ethanolamine(out). It carries out the reaction heme b(in) = heme b(out). Functionally, uniporter that mediates the transport of extracellular choline and ethanolamine into cells, thereby playing a key role in phospholipid biosynthesis. Choline and ethanolamine are the precursors of phosphatidylcholine and phosphatidylethanolamine, respectively, the two most abundant phospholipids. Transport is not coupled with proton transport and is exclusively driven by the choline (or ethanolamine) gradient across the plasma membrane. Also acts as a heme b transporter that mediates heme efflux from the cytoplasm to the extracellular compartment. (Microbial infection) Confers susceptibility to Feline leukemia virus subgroup C (FeLV-C) infection, which is associated with fatal erythroid aplasia, also known as aplastic anemia. The protein is Choline/ethanolamine transporter FLVCR1 (FLVCR1) of Felis catus (Cat).